We begin with the raw amino-acid sequence, 313 residues long: Sideroflexin-4 (313 aa).

2 helical membrane passes run 87-107 and 141-161; these read AAFL…DTGI and TLLG…PHLF. The residue at position 173 (Lys-173) is an N6-acetyllysine. 3 helical membrane passes run 175–191, 230–247, and 269–289; these read TLPI…NVFA, AVLF…IHIF, and FFMM…IGQI.

The protein belongs to the sideroflexin family. As to expression, largely restricted to kidney, brain and heart.

It is found in the mitochondrion inner membrane. Mitochondrial amino-acid transporter. Does not act as a serine transporter: not able to mediate transport of serine into mitochondria. The protein is Sideroflexin-4 of Mus musculus (Mouse).